Reading from the N-terminus, the 118-residue chain is Large ribosomal subunit protein bL20 (118 aa).

This sequence belongs to the bacterial ribosomal protein bL20 family.

Binds directly to 23S ribosomal RNA and is necessary for the in vitro assembly process of the 50S ribosomal subunit. It is not involved in the protein synthesizing functions of that subunit. This Alteromonas mediterranea (strain DSM 17117 / CIP 110805 / LMG 28347 / Deep ecotype) protein is Large ribosomal subunit protein bL20.